We begin with the raw amino-acid sequence, 275 residues long: Polyamine aminopropyltransferase (275 aa).

In terms of domain architecture, PABS spans His-2–Lys-235. An S-methyl-5'-thioadenosine-binding site is contributed by Gln-31. His-62 and Asp-86 together coordinate spermidine. S-methyl-5'-thioadenosine is bound by residues Glu-106 and Asp-137–Gly-138. Catalysis depends on Asp-155, which acts as the Proton acceptor. A spermidine-binding site is contributed by Asp-155–Asp-158. Residue Pro-162 coordinates S-methyl-5'-thioadenosine.

This sequence belongs to the spermidine/spermine synthase family. Homodimer or homotetramer.

Its subcellular location is the cytoplasm. It catalyses the reaction S-adenosyl 3-(methylsulfanyl)propylamine + putrescine = S-methyl-5'-thioadenosine + spermidine + H(+). Its pathway is amine and polyamine biosynthesis; spermidine biosynthesis; spermidine from putrescine: step 1/1. Functionally, catalyzes the irreversible transfer of a propylamine group from the amino donor S-adenosylmethioninamine (decarboxy-AdoMet) to putrescine (1,4-diaminobutane) to yield spermidine. The chain is Polyamine aminopropyltransferase from Desulforudis audaxviator (strain MP104C).